The primary structure comprises 309 residues: MKRKIIVGSRRSKLALTQSNWVIKKLKENYPEIDFEIKEIVTKGDRILDVTLSKVGGKGLFVSEVEQALSDEVIDFAVHSMKDVPSSLKDGLVIGAIPKRESPLDCFVFNEVSTLDDLPKGAVIGTSSLRRAAQLLKHRPDFVVKPIRGNIDTRLQKLHAENFDAIILAKAGLARMGWLENTSLKLEDISPELCLPAVGQGALAIECRETDLQICDMLASIHHEETGICVEAERVFLKKLNGGCEIPIAGFATKTGDSVHFKGLVGNADGSIILESERTGASPAEIGNQVAEELLSEGADTIIKELRNI.

C244 is modified (S-(dipyrrolylmethanemethyl)cysteine).

This sequence belongs to the HMBS family. As to quaternary structure, monomer. Dipyrromethane is required as a cofactor.

The enzyme catalyses 4 porphobilinogen + H2O = hydroxymethylbilane + 4 NH4(+). It participates in porphyrin-containing compound metabolism; protoporphyrin-IX biosynthesis; coproporphyrinogen-III from 5-aminolevulinate: step 2/4. Its function is as follows. Tetrapolymerization of the monopyrrole PBG into the hydroxymethylbilane pre-uroporphyrinogen in several discrete steps. This chain is Porphobilinogen deaminase, found in Listeria innocua serovar 6a (strain ATCC BAA-680 / CLIP 11262).